Here is a 440-residue protein sequence, read N- to C-terminus: tRNA-2-methylthio-N(6)-dimethylallyladenosine synthase (440 aa).

The MTTase N-terminal domain occupies 4–122 (KSYYIITHGC…LPKILERVFE (119 aa)). Positions 13, 49, 83, 159, 163, and 166 each coordinate [4Fe-4S] cluster. A Radical SAM core domain is found at 145–375 (REPGVRAWVT…IELQNGISLE (231 aa)). In terms of domain architecture, TRAM spans 378 to 440 (KNEEGNIHEI…KLFHLEGVLV (63 aa)).

Belongs to the methylthiotransferase family. MiaB subfamily. In terms of assembly, monomer. It depends on [4Fe-4S] cluster as a cofactor.

It localises to the cytoplasm. It catalyses the reaction N(6)-dimethylallyladenosine(37) in tRNA + (sulfur carrier)-SH + AH2 + 2 S-adenosyl-L-methionine = 2-methylsulfanyl-N(6)-dimethylallyladenosine(37) in tRNA + (sulfur carrier)-H + 5'-deoxyadenosine + L-methionine + A + S-adenosyl-L-homocysteine + 2 H(+). In terms of biological role, catalyzes the methylthiolation of N6-(dimethylallyl)adenosine (i(6)A), leading to the formation of 2-methylthio-N6-(dimethylallyl)adenosine (ms(2)i(6)A) at position 37 in tRNAs that read codons beginning with uridine. In Carboxydothermus hydrogenoformans (strain ATCC BAA-161 / DSM 6008 / Z-2901), this protein is tRNA-2-methylthio-N(6)-dimethylallyladenosine synthase.